The sequence spans 103 residues: Putative double-stranded DNA mimic protein HAPS_1002 (103 aa).

This sequence belongs to the putative dsDNA mimic protein family.

Its function is as follows. May act as a double-stranded DNA (dsDNA) mimic. Probably regulates the activity of a dsDNA-binding protein. This chain is Putative double-stranded DNA mimic protein HAPS_1002, found in Glaesserella parasuis serovar 5 (strain SH0165) (Haemophilus parasuis).